The chain runs to 904 residues: Auxilin-related protein 1 (904 aa).

Disordered regions lie at residues 46–99 (AAGK…FDYD), 150–731 (SSIS…NLRK), and 749–776 (SASQSGGFQDVDGETEERRRARLERHQR). Residues 59 to 69 (DPGRDGDDLLF) are compositionally biased toward basic and acidic residues. The span at 81 to 95 (YGSSSGDSRSPSAPA) shows a compositional bias: low complexity. Residues 178-188 (KGADSDREEKG) are compositionally biased toward basic and acidic residues. The span at 201 to 215 (RTSSPPSKRTTSETT) shows a compositional bias: low complexity. The segment covering 232–244 (VEEDPFVVLEESE) has biased composition (acidic residues). The span at 245–271 (STPREPSRTDPLDDIGKFNSRKTDHSS) shows a compositional bias: basic and acidic residues. Residues 370–383 (SAPPPTRPPPPRPT) are compositionally biased toward pro residues. The segment covering 394–419 (SIPTSAYHSHVPSSGRASVNSPTASQ) has biased composition (polar residues). Residues 456–663 (SAAAMKDAMD…AAAEARGRAA (208 aa)) adopt a coiled-coil conformation. 2 stretches are compositionally biased toward basic and acidic residues: residues 462–570 (DAMD…EAHA) and 581–660 (TDAR…EARG). One can recognise a R domain in the interval 619-640 (REKAEKAAAEAKERANAEAREK). Residues 661–673 (RAAAQAKAKQQQE) are compositionally biased toward low complexity. The span at 674–697 (NTNDLDSFFSSISRPNSAPRQRTN) shows a compositional bias: polar residues. A coiled-coil region spans residues 762 to 804 (ETEERRRARLERHQRTQERAAKALAEKNERDLQVQREQVEKDR). Over residues 764–776 (EERRRARLERHQR) the composition is skewed to basic and acidic residues. Residues 839–904 (CGWQPVSLTD…WNKFNSEELF (66 aa)) form the J domain.

In terms of assembly, interacts with SH3P1.

Its subcellular location is the cell membrane. The protein resides in the golgi apparatus. It is found in the trans-Golgi network. The protein localises to the endoplasmic reticulum. It localises to the cytoplasmic vesicle. Promotes uncoating of clathrin-coated vesicles. May interact directly with clathrin. In Arabidopsis thaliana (Mouse-ear cress), this protein is Auxilin-related protein 1.